Reading from the N-terminus, the 92-residue chain is Bombyxin A-3 (92 aa).

A signal peptide spans 1 to 19 (MKILLAIALMLSTVMWVST). Q20 bears the Pyrrolidone carboxylic acid mark. 3 cysteine pairs are disulfide-bonded: C29-C79, C41-C92, and C78-C83. Residues 50–70 (SDAQYVSYGSAWLMPYSEGRG) constitute a propeptide, c peptide like.

The protein belongs to the insulin family. Heterodimer of a B chain and an A chain linked by two disulfide bonds.

Its subcellular location is the secreted. In terms of biological role, brain peptide responsible for activation of prothoracic glands to produce ecdysone in insects. The chain is Bombyxin A-3 (BBXA3) from Bombyx mori (Silk moth).